An 881-amino-acid chain; its full sequence is EEF1AKMT4-ECE2 readthrough transcript protein (881 aa).

The interval methionine 1–glutamate 160 is methyltransferase-like region. Topologically, residues methionine 1–glutamate 178 are cytoplasmic. Positions 26 and 30 each coordinate S-adenosyl-L-methionine. A Phosphotyrosine modification is found at tyrosine 39. Residues tryptophan 41, glycine 66, aspartate 88–tyrosine 89, aspartate 113–valine 114, and lysine 130 contribute to the S-adenosyl-L-methionine site. Residue histidine 174 is modified to Phosphoserine. Residues leucine 179–leucine 199 traverse the membrane as a helical; Signal-anchor for type II membrane protein segment. Residues tryptophan 200–tryptophan 881 lie on the Lumenal side of the membrane. A Peptidase M13 domain is found at threonine 209–tryptophan 881. 5 disulfides stabilise this stretch: cysteine 210/cysteine 215, cysteine 233/cysteine 866, cysteine 241/cysteine 826, cysteine 297/cysteine 546, and cysteine 755/cysteine 878. Residues asparagine 277, asparagine 281, asparagine 322, asparagine 382, asparagine 427, asparagine 494, and asparagine 650 are each glycosylated (N-linked (GlcNAc...) asparagine). A Zn(2+)-binding site is contributed by histidine 718. Glutamate 719 is a catalytic residue. Histidine 722 provides a ligand contact to Zn(2+). Asparagine 743 and asparagine 751 each carry an N-linked (GlcNAc...) asparagine glycan. Glutamate 778 contacts Zn(2+). Aspartate 782 (proton donor) is an active-site residue.

This sequence in the N-terminal section; belongs to the methyltransferase superfamily. In the C-terminal section; belongs to the peptidase M13 family. It depends on Zn(2+) as a cofactor. Expressed at high levels in central nervous system. Expressed in adrenal glands, ovary and uterus, and at low levels in heart.

The protein localises to the golgi apparatus membrane. It is found in the cytoplasmic vesicle. Its subcellular location is the secretory vesicle membrane. The enzyme catalyses Hydrolysis of the 21-Trp-|-Val-22 bond in big endothelin to form endothelin 1.. Its activity is regulated as follows. Inhibited by phosphoramidon. Functionally, converts big endothelin-1 to endothelin-1. May also have methyltransferase activity. May play a role in amyloid-beta processing. The protein is EEF1AKMT4-ECE2 readthrough transcript protein of Mus musculus (Mouse).